Reading from the N-terminus, the 69-residue chain is Conotoxin Gla-TxXI (69 aa).

An N-terminal signal peptide occupies residues 1–25 (MVRVTSVGCFLLVIVSLNLVVLTNA). Intrachain disulfides connect cysteine 26–cysteine 40, cysteine 33–cysteine 45, cysteine 39–cysteine 49, and cysteine 44–cysteine 53. Glutamate 29 carries the 4-carboxyglutamate modification. Proline 56 is modified (proline amide). Residues 60–69 (AKLLEFFRQR) constitute a propeptide that is removed on maturation.

Contains 4 disulfide bonds. In terms of tissue distribution, expressed by the venom duct.

The protein resides in the secreted. In Conus textile (Cloth-of-gold cone), this protein is Conotoxin Gla-TxXI.